The sequence spans 122 residues: MSKRSEKLAETIHETISSILSRGLNDPRIGFVTLTAVDVVEDLSIARIYFTAIGDRDARKNSEAGLNSAKGYLRRELGKVLTIRHIPELIFKYDESQEYGNRIDSILREIATEHDRDDSEHS.

The protein belongs to the RbfA family. As to quaternary structure, monomer. Binds 30S ribosomal subunits, but not 50S ribosomal subunits or 70S ribosomes.

It localises to the cytoplasm. In terms of biological role, one of several proteins that assist in the late maturation steps of the functional core of the 30S ribosomal subunit. Associates with free 30S ribosomal subunits (but not with 30S subunits that are part of 70S ribosomes or polysomes). Required for efficient processing of 16S rRNA. May interact with the 5'-terminal helix region of 16S rRNA. The chain is Ribosome-binding factor A from Pelobacter propionicus (strain DSM 2379 / NBRC 103807 / OttBd1).